An 853-amino-acid polypeptide reads, in one-letter code: DNA mismatch repair protein MutS (853 aa).

614-621 (GPNMGGKS) lines the ATP pocket.

The protein belongs to the DNA mismatch repair MutS family.

In terms of biological role, this protein is involved in the repair of mismatches in DNA. It is possible that it carries out the mismatch recognition step. This protein has a weak ATPase activity. This Shigella flexneri serotype 5b (strain 8401) protein is DNA mismatch repair protein MutS.